A 445-amino-acid polypeptide reads, in one-letter code: TNF receptor-associated factor family protein DDB_G0290971 (445 aa).

The segment at 23-67 (CPICFDLYYSSSSKKEVFQCRDGHLACKSCWSDSLLNKKECMICR) adopts an RING-type; degenerate zinc-finger fold. 2 consecutive TRAF-type zinc fingers follow at residues 133-186 (KHQV…QLDA) and 186-242 (AHAL…ESID). A coiled-coil region spans residues 269 to 307 (QLELVECKNQIYQINNKYEKLLERVIKLEQLSMDASNKL). In terms of domain architecture, MATH spans 314 to 441 (KNSIIFATFS…EDKLVIGLRI (128 aa)).

Belongs to the TNF receptor-associated factor family. A subfamily.

The protein localises to the cytoplasm. Its function is as follows. Probable adapter protein and signal transducer that links members of the tumor necrosis factor receptor family to different signaling pathways by association with the receptor cytoplasmic domain and kinases. This is TNF receptor-associated factor family protein DDB_G0290971 from Dictyostelium discoideum (Social amoeba).